The following is a 199-amino-acid chain: dITP/XTP pyrophosphatase (199 aa).

8–13 (SGNAGK) is a substrate binding site. The active-site Proton acceptor is D69. Position 69 (D69) interacts with Mg(2+). Residues S70, 154 to 157 (FGYN), K177, and 182 to 183 (HR) each bind substrate.

Belongs to the HAM1 NTPase family. In terms of assembly, homodimer. The cofactor is Mg(2+).

The catalysed reaction is XTP + H2O = XMP + diphosphate + H(+). The enzyme catalyses dITP + H2O = dIMP + diphosphate + H(+). It carries out the reaction ITP + H2O = IMP + diphosphate + H(+). Functionally, pyrophosphatase that catalyzes the hydrolysis of nucleoside triphosphates to their monophosphate derivatives, with a high preference for the non-canonical purine nucleotides XTP (xanthosine triphosphate), dITP (deoxyinosine triphosphate) and ITP. Seems to function as a house-cleaning enzyme that removes non-canonical purine nucleotides from the nucleotide pool, thus preventing their incorporation into DNA/RNA and avoiding chromosomal lesions. The polypeptide is dITP/XTP pyrophosphatase (Xylella fastidiosa (strain Temecula1 / ATCC 700964)).